The following is a 346-amino-acid chain: Enkurin domain-containing protein 1 (346 aa).

The tract at residues 1 to 35 (MCEGPSRISGPIPPDPTLCPDNYRRPTSAQGRLEG) is disordered. Phosphoserine is present on Ser91. A required for binding to microtubules region spans residues 91 to 171 (SLKRKDPKDH…AHFLRAHSRC (81 aa)). Basic and acidic residues predominate over residues 114 to 125 (RFREQERSREQG). Disordered regions lie at residues 114-137 (RFREQERSREQGQPRPLKALWRSP), 167-197 (AHSRCGPGLPPPHVSSPQPTPPGPEAKEPGL), and 260-280 (AEARKQSQPDPAMPPGHTRMP). Ser136 carries the phosphoserine modification. The span at 174 to 190 (GLPPPHVSSPQPTPPGP) shows a compositional bias: pro residues. The Enkurin domain occupies 251–343 (ERRDLWRREA…IFSRPKVFVK (93 aa)).

As to quaternary structure, interacts with alpha-tubulin. Interacts (via central region) with CCP110 (via N-terminal region); competes with CEP97 for binding to CCP110.

It is found in the cytoplasm. It localises to the cytoskeleton. The protein resides in the microtubule organizing center. Its subcellular location is the centrosome. The protein localises to the centriole. It is found in the cilium basal body. It localises to the cell projection. The protein resides in the cilium. Its subcellular location is the spindle. The protein localises to the spindle pole. It is found in the cilium axoneme. Microtubule-binding protein which regulates microtubule organization and stability. Promotes the stability of astral microtubules and facilitates the proper orientation of the mitotic spindle. This allows the oriented division of basal keratinocytes and contributes to epidermal stratification. Required for the assembly of both primary and motile cilia. Destabilizes the interaction between CCP110 and CEP97 by competing with CEP97 for binding to CCP110 which promotes the removal of CCP110 and CEP97 from the mother centriole and allows the initiation of ciliogenesis. This chain is Enkurin domain-containing protein 1 (ENKD1), found in Homo sapiens (Human).